The chain runs to 2130 residues: Bromodomain adjacent to zinc finger domain protein 2B (2130 aa).

Disordered regions lie at residues 1-42 (MESG…TGAA), 82-118 (LFAPPAQNHDSTPFHPRTTGKNNRGSLEKGINGSLNG), 151-293 (GGRK…QKQP), 491-518 (KTTGNRTLVVPSTSPVLPGSGKDKPVSN), 543-633 (VDSD…SSIG), 756-790 (EGRRGRPPNPDRQHSREESRMRRRKGRPPNVGSTE), and 944-966 (RKKAEEKERLKQEKRDEKRLNKE). Over residues 8–33 (TSSSVSSTAAASSPVSSTPSVASAVS) the composition is skewed to low complexity. A compositionally biased stretch (low complexity) spans 183–206 (ESSSNSDSDSGSSSDTSSEGISSS). Positions 207 to 234 (DSDDLEEDEEEEEDQSAEESEDDESDSE) are enriched in acidic residues. Residues 250–270 (GVKDMKTDGQKAHEKSQEKRT) show a composition bias toward basic and acidic residues. Residues 272 to 283 (QQIPLVSDSQTH) show a composition bias toward polar residues. Positions 284-293 (SSFQSQQKQP) are enriched in low complexity. The span at 492-505 (TTGNRTLVVPSTSP) shows a compositional bias: polar residues. Positions 543–554 (VDSDAPSSKESD) are enriched in basic and acidic residues. Acidic residues predominate over residues 555 to 611 (DSNDDDDDDEDEDEDDEDDDSDDSQSESDSNSESDTDGSEDEDDEDDKDQDESDTDT). Over residues 623-633 (TGSSIKSSSIG) the composition is skewed to low complexity. The region spanning 687-762 (VTDERELRVP…RAMEGRRGRP (76 aa)) is the MBD domain. Residues 756–775 (EGRRGRPPNPDRQHSREESR) show a composition bias toward basic and acidic residues. The stretch at 797-984 (AKLLRKLQAQ…ELEMAKELKK (188 aa)) forms a coiled coil. In terms of domain architecture, DDT spans 1010 to 1075 (GSTFSDCLMI…VTAAVCDPGL (66 aa)). Disordered stretches follow at residues 1186–1265 (TGKR…DQTV), 1431–1454 (SLCSLQPSVSQSSSEKSDSSNLFS), 1499–1545 (VTHV…PFAM), and 1773–1795 (HKKHDGDSAGGGEGSTSSLERKN). Residues 1220–1244 (SDYDDDDDDDSDDQADEDDEDEEDK) show a composition bias toward acidic residues. Positions 1245–1254 (EDKKGKKAEV) are enriched in basic and acidic residues. Pro residues predominate over residues 1514–1526 (SHPPSKSPSPVPS). The segment at 1895 to 1945 (KVYCQICRKGDNEELLLLCDGCDKGCHTYCHRPKITTIPDGDWFCPACIAK) adopts a PHD-type zinc-finger fold. Residues 1957–2019 (QIKGKKSNEQ…KQENFTAIKK (63 aa)) are disordered. Over residues 1991–2002 (GKTEPKKRKMDE) the composition is skewed to basic and acidic residues. A compositionally biased stretch (polar residues) spans 2004–2014 (VSVSQGKQENF). A Bromo domain is found at 2022–2126 (RDDSKDLAIC…KYFEKKWTEI (105 aa)).

The protein belongs to the WAL family.

Its subcellular location is the nucleus. Its function is as follows. Regulatory subunit of the ATP-dependent BRF-1 and BRF-5 ISWI chromatin remodeling complexes, which form ordered nucleosome arrays on chromatin and facilitate access to DNA during DNA-templated processes such as DNA replication, transcription, and repair. Both complexes regulate the spacing of nucleosomes along the chromatin and have the ability to slide mononucleosomes to the center of a DNA template. The BRF-1 ISWI chromatin remodeling complex has a lower ATP hydrolysis rate than the BRF-5 ISWI chromatin remodeling complex. Chromatin reader protein. Represses the expression of mitochondrial function-related genes, perhaps by transcriptional regulation. The chain is Bromodomain adjacent to zinc finger domain protein 2B (BAZ2B) from Gallus gallus (Chicken).